Reading from the N-terminus, the 303-residue chain is Proteasome subunit beta (303 aa).

The propeptide at 1–67 (MTWQFPDRLS…SGGTGQLPHG (67 aa)) is removed in mature form; by autocatalysis. Threonine 68 (nucleophile) is an active-site residue.

This sequence belongs to the peptidase T1B family. As to quaternary structure, the 20S proteasome core is composed of 14 alpha and 14 beta subunits that assemble into four stacked heptameric rings, resulting in a barrel-shaped structure. The two inner rings, each composed of seven catalytic beta subunits, are sandwiched by two outer rings, each composed of seven alpha subunits. The catalytic chamber with the active sites is on the inside of the barrel. Has a gated structure, the ends of the cylinder being occluded by the N-termini of the alpha-subunits. Is capped by the proteasome-associated ATPase, ARC.

The protein resides in the cytoplasm. The catalysed reaction is Cleavage of peptide bonds with very broad specificity.. It participates in protein degradation; proteasomal Pup-dependent pathway. Its activity is regulated as follows. The formation of the proteasomal ATPase ARC-20S proteasome complex, likely via the docking of the C-termini of ARC into the intersubunit pockets in the alpha-rings, may trigger opening of the gate for substrate entry. Interconversion between the open-gate and close-gate conformations leads to a dynamic regulation of the 20S proteasome proteolysis activity. Component of the proteasome core, a large protease complex with broad specificity involved in protein degradation. The sequence is that of Proteasome subunit beta from Mycobacterium avium (strain 104).